The primary structure comprises 168 residues: MLDMTERQVESVLIEIPKGSRNKYEYDKEKKVIKFDRMLFSSMVYPCDYGFFPDTLALDGDPLDALVLTWEPTFPGCVIDVHPVALLDMKDDKGRDEKILCVPETDPLWNYIETLEQVPPHLLKEIVHFFETYKNLEGKHVIVIGWEGLDAAVDMLREAKSRYLEKNK.

Substrate contacts are provided by Lys-23, Arg-37, and Tyr-49. Residues Asp-59, Asp-64, and Asp-96 each coordinate Mg(2+). Tyr-133 is a binding site for substrate.

The protein belongs to the PPase family. As to quaternary structure, homohexamer. Mg(2+) serves as cofactor.

It is found in the cytoplasm. The catalysed reaction is diphosphate + H2O = 2 phosphate + H(+). In terms of biological role, catalyzes the hydrolysis of inorganic pyrophosphate (PPi) forming two phosphate ions. The chain is Inorganic pyrophosphatase from Methanosarcina acetivorans (strain ATCC 35395 / DSM 2834 / JCM 12185 / C2A).